Here is a 262-residue protein sequence, read N- to C-terminus: Shikimate dehydrogenase (NADP(+)) (262 aa).

Shikimate contacts are provided by residues 13-15 (SLS) and threonine 59. The Proton acceptor role is filled by lysine 63. Residue aspartate 75 participates in NADP(+) binding. Shikimate contacts are provided by asparagine 84 and aspartate 99. Residues 122 to 126 (GAGGA), 144 to 149 (NRTLEK), and methionine 205 contribute to the NADP(+) site. Residue tyrosine 207 coordinates shikimate. Glycine 228 is a binding site for NADP(+).

The protein belongs to the shikimate dehydrogenase family. In terms of assembly, homodimer.

It carries out the reaction shikimate + NADP(+) = 3-dehydroshikimate + NADPH + H(+). It participates in metabolic intermediate biosynthesis; chorismate biosynthesis; chorismate from D-erythrose 4-phosphate and phosphoenolpyruvate: step 4/7. Functionally, involved in the biosynthesis of the chorismate, which leads to the biosynthesis of aromatic amino acids. Catalyzes the reversible NADPH linked reduction of 3-dehydroshikimate (DHSA) to yield shikimate (SA). The sequence is that of Shikimate dehydrogenase (NADP(+)) from Ignicoccus hospitalis (strain KIN4/I / DSM 18386 / JCM 14125).